The primary structure comprises 153 residues: Interleukin-2 (153 aa).

Residues 1 to 20 (MYKVQLLSCIALTLALLTSS) form the signal peptide. Residue T23 is glycosylated (O-linked (GalNAc...) threonine). A disulfide bridge links C78 with C125. N111 carries an N-linked (GlcNAc...) asparagine glycan.

The protein belongs to the IL-2 family.

The protein localises to the secreted. Functionally, cytokine produced by activated CD4-positive helper T-cells and to a lesser extend activated CD8-positive T-cells and natural killer (NK) cells that plays pivotal roles in the immune response and tolerance. Binds to a receptor complex composed of either the high-affinity trimeric IL-2R (IL2RA/CD25, IL2RB/CD122 and IL2RG/CD132) or the low-affinity dimeric IL-2R (IL2RB and IL2RG). Interaction with the receptor leads to oligomerization and conformation changes in the IL-2R subunits resulting in downstream signaling starting with phosphorylation of JAK1 and JAK3. In turn, JAK1 and JAK3 phosphorylate the receptor to form a docking site leading to the phosphorylation of several substrates including STAT5. This process leads to activation of several pathways including STAT, phosphoinositide-3-kinase/PI3K and mitogen-activated protein kinase/MAPK pathways. Functions as a T-cell growth factor and can increase NK-cell cytolytic activity as well. Promotes strong proliferation of activated B-cells and subsequently immunoglobulin production. Plays a pivotal role in regulating the adaptive immune system by controlling the survival and proliferation of regulatory T-cells, which are required for the maintenance of immune tolerance. Moreover, participates in the differentiation and homeostasis of effector T-cell subsets, including Th1, Th2, Th17 as well as memory CD8-positive T-cells. The chain is Interleukin-2 (IL2) from Oryctolagus cuniculus (Rabbit).